A 123-amino-acid chain; its full sequence is UPF0231 protein PMI2039 (123 aa).

This sequence belongs to the UPF0231 family.

In Proteus mirabilis (strain HI4320), this protein is UPF0231 protein PMI2039.